The following is a 626-amino-acid chain: DNA mismatch repair protein MutL (626 aa).

Disordered regions lie at residues 385–413 (SGAS…PSMV) and 418–437 (LTPS…VAPD).

Belongs to the DNA mismatch repair MutL/HexB family.

Its function is as follows. This protein is involved in the repair of mismatches in DNA. It is required for dam-dependent methyl-directed DNA mismatch repair. May act as a 'molecular matchmaker', a protein that promotes the formation of a stable complex between two or more DNA-binding proteins in an ATP-dependent manner without itself being part of a final effector complex. The sequence is that of DNA mismatch repair protein MutL from Chlorobaculum parvum (strain DSM 263 / NCIMB 8327) (Chlorobium vibrioforme subsp. thiosulfatophilum).